We begin with the raw amino-acid sequence, 122 residues long: Small ribosomal subunit protein uS13 (122 aa).

The interval 97–122 (PVRGQRTKTNARTRKGPARTVAGKKK) is disordered.

This sequence belongs to the universal ribosomal protein uS13 family. Part of the 30S ribosomal subunit. Forms a loose heterodimer with protein S19. Forms two bridges to the 50S subunit in the 70S ribosome.

Located at the top of the head of the 30S subunit, it contacts several helices of the 16S rRNA. In the 70S ribosome it contacts the 23S rRNA (bridge B1a) and protein L5 of the 50S subunit (bridge B1b), connecting the 2 subunits; these bridges are implicated in subunit movement. Contacts the tRNAs in the A and P-sites. The protein is Small ribosomal subunit protein uS13 of Geobacter sulfurreducens (strain ATCC 51573 / DSM 12127 / PCA).